The chain runs to 460 residues: Muscarinic acetylcholine receptor M1 (460 aa).

Topologically, residues 1-22 (MNTSAPPAVSPNITVLAPGKGP) are extracellular. N-linked (GlcNAc...) asparagine glycans are attached at residues Asn2 and Asn12. The helical transmembrane segment at 23–48 (WQVAFIGITTGLLSLATVTGNLLVLI) threads the bilayer. Residues 49-62 (SFKVNTELKTVNNY) lie on the Cytoplasmic side of the membrane. Residues 63 to 84 (FLLSLACADLIIGTFSMNLYTT) traverse the membrane as a helical segment. Residues 85-95 (YLLMGHWALGT) are Extracellular-facing. A helical membrane pass occupies residues 96 to 121 (LACDLWLALDYVASNASVMNLLLISF). A disulfide bridge connects residues Cys98 and Cys178. The Cytoplasmic segment spans residues 122 to 142 (DRYFSVTRPLSYRAKRTPRRA). Residues 143-164 (ALMIGLAWLVSFVLWAPAILFW) form a helical membrane-spanning segment. The Extracellular portion of the chain corresponds to 165–185 (QYLVGERTVLAGQCYIQFLSQ). A helical membrane pass occupies residues 186-209 (PIITFGTAMAAFYLPVTVMCTLYW). Residues 210–366 (RIYRETENRA…LVKEKKAART (157 aa)) lie on the Cytoplasmic side of the membrane. Disordered regions lie at residues 225–256 (LQGS…ETPP), 274–297 (WKEE…EEPG), and 310–351 (EAQA…QLAK). Thr230 carries the phosphothreonine modification. Over residues 238-247 (SSSSERSQPG) the composition is skewed to low complexity. Residues 328-343 (RPTKKGRDRAGKGQKP) show a composition bias toward basic residues. A helical transmembrane segment spans residues 367–390 (LSAILLAFILTWTPYNIMVLVSTF). Residues 391 to 397 (CKDCVPE) lie on the Extracellular side of the membrane. A helical transmembrane segment spans residues 398 to 420 (TLWELGYWLCYVNSTINPMCYAL). The Cytoplasmic portion of the chain corresponds to 421–460 (CNKAFRDTFRLLLLCRWDKRRWRKIPKRPGSVHRTPSRQC). Residue Thr428 is modified to Phosphothreonine. Ser451 bears the Phosphoserine mark. At Thr455 the chain carries Phosphothreonine. Residue Ser457 is modified to Phosphoserine.

Belongs to the G-protein coupled receptor 1 family. Muscarinic acetylcholine receptor subfamily. CHRM1 sub-subfamily. As to quaternary structure, interacts with GPRASP2. Interacts with TMEM147.

The protein resides in the cell membrane. The protein localises to the postsynaptic cell membrane. Its function is as follows. The muscarinic acetylcholine receptor mediates various cellular responses, including inhibition of adenylate cyclase, breakdown of phosphoinositides and modulation of potassium channels through the action of G proteins. Primary transducing effect is Pi turnover. This is Muscarinic acetylcholine receptor M1 (CHRM1) from Homo sapiens (Human).